A 520-amino-acid chain; its full sequence is mRNA-capping enzyme subunit beta (520 aa).

Residues 1-185 (MNVGSILNDD…PQPVFDDQDD (185 aa)) are disordered. 2 stretches are compositionally biased toward polar residues: residues 11–21 (PPSSGNANGND) and 44–56 (ITSMLNDTPSDST). The segment covering 92–108 (SSSSVGSSEHSSARSSP) has biased composition (low complexity). Basic and acidic residues-rich tracts occupy residues 126–135 (PATKTEKKAE) and 149–176 (KLEEHENDTNKVEKVVDSAPEPKPKKEP).

This sequence belongs to the fungal TPase family. As to quaternary structure, heterodimer. The mRNA-capping enzyme is composed of two separate chains alpha and beta, respectively a mRNA guanylyltransferase and an mRNA 5'-triphosphate monophosphatase. The cofactor is Mg(2+).

It localises to the nucleus. The catalysed reaction is a 5'-end triphospho-ribonucleoside in mRNA + H2O = a 5'-end diphospho-ribonucleoside in mRNA + phosphate + H(+). Its function is as follows. First step of mRNA capping. Converts the 5'-triphosphate end of a nascent mRNA chain into a diphosphate end. This chain is mRNA-capping enzyme subunit beta (CET1), found in Candida albicans (strain SC5314 / ATCC MYA-2876) (Yeast).